The sequence spans 784 residues: Ubiquitin carboxyl-terminal hydrolase 1 (784 aa).

2 disordered regions span residues 1 to 21 (MPGVIPSESNGLSRGSPSKKN) and 34 to 56 (KRALDFTDSQENEEKTSEYRGSE). Polar residues predominate over residues 7–16 (SESNGLSRGS). Phosphoserine occurs at positions 16 and 42. The segment covering 45–56 (NEEKTSEYRGSE) has biased composition (basic and acidic residues). Ser-67 carries the phosphoserine modification. Residues 81–784 (VGLNNLGNTC…TPYLLFYKKL (704 aa)) enclose the USP domain. Residue Cys-90 is the Nucleophile of the active site. Basic and acidic residues-rich tracts occupy residues 233–243 (VEEQSLQKEET) and 252–264 (DSMRNTEDVKEQL). 2 disordered regions span residues 233–342 (VEEQ…INWL) and 362–414 (TTNQ…KSGN). The residue at position 474 (Ser-474) is a Phosphoserine. Catalysis depends on His-592, which acts as the Proton acceptor. Residues 684-725 (NPDKVVGTPFTDNRNSETNDTTNGTHESDRNKESSDQTGVNM) are disordered. Polar residues predominate over residues 693–708 (FTDNRNSETNDTTNGT). Over residues 709-718 (HESDRNKESS) the composition is skewed to basic and acidic residues. Ser-767 carries the phosphoserine modification.

The protein belongs to the peptidase C19 family. In terms of assembly, interacts with FANCD2 and PCNA. Interacts with WDR48. Interacts with ATAD5; the interaction regulates USP1-mediated PCNA deubiquitination. Post-translationally, autocatalytic cleavage of USP1 following UV irradiation inactivates it, leading to an increase in ubiquitinated PCNA, recruitment of POLH and translesion synthesis. Ubiquitinated by the CRL2(KLHDC2) complex following autocatalytic cleavage, leading to its degradation: the CRL2(KLHDC2) complex recognizes the diglycine (Gly-Gly) at the C-terminus.

The protein resides in the nucleus. The catalysed reaction is Thiol-dependent hydrolysis of ester, thioester, amide, peptide and isopeptide bonds formed by the C-terminal Gly of ubiquitin (a 76-residue protein attached to proteins as an intracellular targeting signal).. Its function is as follows. Negative regulator of DNA damage repair which specifically deubiquitinates monoubiquitinated FANCD2. Also involved in PCNA-mediated translesion synthesis (TLS) by deubiquitinating monoubiquitinated PCNA. Has almost no deubiquitinating activity by itself and requires the interaction with WDR48 to have a high activity. The polypeptide is Ubiquitin carboxyl-terminal hydrolase 1 (Mus musculus (Mouse)).